Here is a 431-residue protein sequence, read N- to C-terminus: Glutamate-1-semialdehyde 2,1-aminomutase (431 aa).

Residue K265 is modified to N6-(pyridoxal phosphate)lysine.

Belongs to the class-III pyridoxal-phosphate-dependent aminotransferase family. HemL subfamily. As to quaternary structure, homodimer. Pyridoxal 5'-phosphate serves as cofactor.

It localises to the cytoplasm. The catalysed reaction is (S)-4-amino-5-oxopentanoate = 5-aminolevulinate. Its pathway is porphyrin-containing compound metabolism; protoporphyrin-IX biosynthesis; 5-aminolevulinate from L-glutamyl-tRNA(Glu): step 2/2. This is Glutamate-1-semialdehyde 2,1-aminomutase from Aliivibrio fischeri (strain ATCC 700601 / ES114) (Vibrio fischeri).